Consider the following 259-residue polypeptide: uncharacterized protein (259 aa).

His-9, His-11, Glu-97, His-133, His-157, and Asp-207 together coordinate a divalent metal cation.

It belongs to the metallo-dependent hydrolases superfamily. TatD-type hydrolase family. Requires a divalent metal cation as cofactor.

This is an uncharacterized protein from Escherichia coli (strain K12).